A 151-amino-acid polypeptide reads, in one-letter code: MSRIEEITKELVMPILEENNFELVDVEYKKEGKHWYLRVYIDKEGGITLDDCQLVSEYLSDRLDEVDPIDHSYILEVSSPGLDRPLKTPRDFKRNLGKEVEVSLYQPIDKRKKFTGELLEFTGDKIILLCEGEKREFEMKNVRLVKPVIKF.

This sequence belongs to the RimP family.

The protein localises to the cytoplasm. Functionally, required for maturation of 30S ribosomal subunits. This Caldanaerobacter subterraneus subsp. tengcongensis (strain DSM 15242 / JCM 11007 / NBRC 100824 / MB4) (Thermoanaerobacter tengcongensis) protein is Ribosome maturation factor RimP.